Here is a 403-residue protein sequence, read N- to C-terminus: 1-deoxy-D-xylulose 5-phosphate reductoisomerase (403 aa).

6 residues coordinate NADPH: threonine 18, glycine 19, serine 20, isoleucine 21, glutamine 46, and asparagine 132. Residue lysine 133 participates in 1-deoxy-D-xylulose 5-phosphate binding. Glutamate 134 is a binding site for NADPH. Aspartate 158 provides a ligand contact to Mn(2+). Serine 159, glutamate 160, serine 189, and histidine 212 together coordinate 1-deoxy-D-xylulose 5-phosphate. Glutamate 160 lines the Mn(2+) pocket. Glycine 218 contributes to the NADPH binding site. The 1-deoxy-D-xylulose 5-phosphate site is built by serine 225, asparagine 230, lysine 231, and glutamate 234. Glutamate 234 contributes to the Mn(2+) binding site.

Belongs to the DXR family. The cofactor is Mg(2+). Mn(2+) is required as a cofactor.

It catalyses the reaction 2-C-methyl-D-erythritol 4-phosphate + NADP(+) = 1-deoxy-D-xylulose 5-phosphate + NADPH + H(+). It functions in the pathway isoprenoid biosynthesis; isopentenyl diphosphate biosynthesis via DXP pathway; isopentenyl diphosphate from 1-deoxy-D-xylulose 5-phosphate: step 1/6. Its function is as follows. Catalyzes the NADPH-dependent rearrangement and reduction of 1-deoxy-D-xylulose-5-phosphate (DXP) to 2-C-methyl-D-erythritol 4-phosphate (MEP). The polypeptide is 1-deoxy-D-xylulose 5-phosphate reductoisomerase (Aromatoleum aromaticum (strain DSM 19018 / LMG 30748 / EbN1) (Azoarcus sp. (strain EbN1))).